The sequence spans 289 residues: N-acetylmuramoyl-L-alanine amidase AmiA (289 aa).

Positions 1–34 (MSTFKPLKTLTSRRQVLKAGLAALTLSGMSQAIA) form a signal peptide, tat-type signal. The disordered stretch occupies residues 39–63 (LKTSNGHSKPKAKKSGGKRVVVLDP). Over residues 46–55 (SKPKAKKSGG) the composition is skewed to basic residues. The MurNAc-LAA domain occupies 59-273 (VVLDPGHGGI…IATAIAEGVI (215 aa)).

This sequence belongs to the N-acetylmuramoyl-L-alanine amidase 3 family. Post-translationally, exported by the Tat system. The position of the signal peptide cleavage has not been experimentally proven. Can also be exported by the Sec system.

It is found in the periplasm. It catalyses the reaction Hydrolyzes the link between N-acetylmuramoyl residues and L-amino acid residues in certain cell-wall glycopeptides.. In terms of biological role, cell-wall hydrolase involved in septum cleavage during cell division. Can also act as powerful autolysin in the presence of murein synthesis inhibitors. The protein is N-acetylmuramoyl-L-alanine amidase AmiA (amiA) of Escherichia coli (strain K12).